A 266-amino-acid chain; its full sequence is 3-methyl-2-oxobutanoate hydroxymethyltransferase (266 aa).

The Mg(2+) site is built by Asp43 and Asp82. 3-methyl-2-oxobutanoate is bound by residues Asp43–Ser44, Asp82, and Lys110. Glu112 contacts Mg(2+). Catalysis depends on Glu179, which acts as the Proton acceptor.

The protein belongs to the PanB family. As to quaternary structure, homodecamer; pentamer of dimers. Mg(2+) serves as cofactor.

The protein localises to the cytoplasm. It carries out the reaction 3-methyl-2-oxobutanoate + (6R)-5,10-methylene-5,6,7,8-tetrahydrofolate + H2O = 2-dehydropantoate + (6S)-5,6,7,8-tetrahydrofolate. It participates in cofactor biosynthesis; (R)-pantothenate biosynthesis; (R)-pantoate from 3-methyl-2-oxobutanoate: step 1/2. Its function is as follows. Catalyzes the reversible reaction in which hydroxymethyl group from 5,10-methylenetetrahydrofolate is transferred onto alpha-ketoisovalerate to form ketopantoate. The protein is 3-methyl-2-oxobutanoate hydroxymethyltransferase of Psychrobacter cryohalolentis (strain ATCC BAA-1226 / DSM 17306 / VKM B-2378 / K5).